Reading from the N-terminus, the 113-residue chain is Protein SPIRAL1-like 1 (113 aa).

Positions 1–12 (MGRGVSVGGGQS) are enriched in gly residues. Residues 1–50 (MGRGVSVGGGQSSLGYLFGSGEAPKPAINNAPAPSSETLPISADPSPKHV) are disordered. Over residues 23 to 34 (APKPAINNAPAP) the composition is skewed to low complexity. Phosphoserine is present on S69. Residues 79 to 113 (QNTGNFLTDRPSTKVHAAPGGGSSLDYLFGGGGSN) are disordered. A compositionally biased stretch (gly residues) spans 97-113 (PGGGSSLDYLFGGGGSN).

Belongs to the SPIRAL1 family. Detected in pollen of mature flowers.

Functionally, acts redundantly with SPR1 in maintaining the cortical microtubules organization essential for anisotropic cell growth. The chain is Protein SPIRAL1-like 1 (SP1L1) from Arabidopsis thaliana (Mouse-ear cress).